Reading from the N-terminus, the 77-residue chain is Large ribosomal subunit protein eL20 (77 aa).

This sequence belongs to the eukaryotic ribosomal protein eL20 family. As to quaternary structure, part of the 50S ribosomal subunit. Binds 23S rRNA.

The polypeptide is Large ribosomal subunit protein eL20 (Thermococcus kodakarensis (strain ATCC BAA-918 / JCM 12380 / KOD1) (Pyrococcus kodakaraensis (strain KOD1))).